Consider the following 151-residue polypeptide: 3-hydroxyacyl-[acyl-carrier-protein] dehydratase FabZ (151 aa).

His54 is a catalytic residue.

It belongs to the thioester dehydratase family. FabZ subfamily.

Its subcellular location is the cytoplasm. It carries out the reaction a (3R)-hydroxyacyl-[ACP] = a (2E)-enoyl-[ACP] + H2O. Functionally, involved in unsaturated fatty acids biosynthesis. Catalyzes the dehydration of short chain beta-hydroxyacyl-ACPs and long chain saturated and unsaturated beta-hydroxyacyl-ACPs. This Klebsiella pneumoniae (strain 342) protein is 3-hydroxyacyl-[acyl-carrier-protein] dehydratase FabZ.